Here is a 458-residue protein sequence, read N- to C-terminus: MSTGTVVQVIGAVVDVEFPQDAVPQVYDALEIKSEDLVLEVQQQLGGGVVRTIAMGSSDGLRRGLEVVNSGSPISVPVGEKTLGRIMNVLGQPVDEAGEIGEEERYVIHREAPSYEDQSNTTELLETGIKVIDLVCPFAKGGKVGLFGGAGVGKTVNMMELINNIAKAHSGLSVFAGVGERTREGNDFYYEMEDSGVLDKVAMVYGQMNEPPGNRLRVALTGLTMAEKFRDEGKDVLFFVDNIYRYTLAGTEVSALLGRMPSAVGYQPTLAEEMGVLQERITSTKTGSITSVQAVYVPADDLTDPSPATTFAHLDATVVLSRNIASMGIYPAVDPLDSTSRQLDPLVVGQEHYDVANGVQTVLQRYKELKDIIAILGMDELSDEDKTTVSRARKIEKYLSQPFFVAEVFTGSPGKYVSLKDTIRGFKGILEGEYDNLPEQAFYMVGSIDEVVEKANKK.

148 to 155 contributes to the ATP binding site; the sequence is GGAGVGKT.

This sequence belongs to the ATPase alpha/beta chains family. As to quaternary structure, F-type ATPases have 2 components, CF(1) - the catalytic core - and CF(0) - the membrane proton channel. CF(1) has five subunits: alpha(3), beta(3), gamma(1), delta(1), epsilon(1). CF(0) has three main subunits: a(1), b(2) and c(9-12). The alpha and beta chains form an alternating ring which encloses part of the gamma chain. CF(1) is attached to CF(0) by a central stalk formed by the gamma and epsilon chains, while a peripheral stalk is formed by the delta and b chains.

Its subcellular location is the cell inner membrane. The enzyme catalyses ATP + H2O + 4 H(+)(in) = ADP + phosphate + 5 H(+)(out). Produces ATP from ADP in the presence of a proton gradient across the membrane. The catalytic sites are hosted primarily by the beta subunits. The polypeptide is ATP synthase subunit beta (Shewanella woodyi (strain ATCC 51908 / MS32)).